The chain runs to 334 residues: Ribosomal RNA small subunit methyltransferase H (334 aa).

S-adenosyl-L-methionine-binding positions include 39 to 41 (GGH), D59, F83, D100, and Q107. The tract at residues 303–334 (ERTQAHGAERSDMRRAERPDARRAEHGEVLPP) is disordered.

Belongs to the methyltransferase superfamily. RsmH family.

The protein localises to the cytoplasm. The catalysed reaction is cytidine(1402) in 16S rRNA + S-adenosyl-L-methionine = N(4)-methylcytidine(1402) in 16S rRNA + S-adenosyl-L-homocysteine + H(+). Its function is as follows. Specifically methylates the N4 position of cytidine in position 1402 (C1402) of 16S rRNA. The sequence is that of Ribosomal RNA small subunit methyltransferase H from Verminephrobacter eiseniae (strain EF01-2).